Here is a 220-residue protein sequence, read N- to C-terminus: Large ribosomal subunit protein uL3 (220 aa).

The disordered stretch occupies residues 127-155 (FQGAIKRHGQSRGPMSHSSHFHRAPDSVG).

Belongs to the universal ribosomal protein uL3 family. In terms of assembly, part of the 50S ribosomal subunit. Forms a cluster with proteins L14 and L19.

Functionally, one of the primary rRNA binding proteins, it binds directly near the 3'-end of the 23S rRNA, where it nucleates assembly of the 50S subunit. The chain is Large ribosomal subunit protein uL3 from Staphylococcus aureus (strain JH9).